A 353-amino-acid chain; its full sequence is Phospho-N-acetylmuramoyl-pentapeptide-transferase (353 aa).

10 consecutive transmembrane segments (helical) span residues 22–42 (FAFFIALCLSLFLMPKFITWA), 65–85 (TPTMGGLIFISSAVIASLFCI), 88–108 (DNIFAISALLCLILFCLIGLI), 129–149 (LLAQIIAGLICILPLYFSSEL), 161–181 (PLFDMEIFAIAFWILVLISSS), 192–212 (GLATVPSIFSLSTLGIFLYLS), 228–248 (GLGEVVIICAALIGALMGFLW), 256–276 (VFMGDSGSLALGGFIGFLAII), 281–301 (ILLLLIGFVFVLETVSVILQV), and 330–350 (KIIVRFWMIALLSNLLALASI).

Belongs to the glycosyltransferase 4 family. MraY subfamily. Mg(2+) serves as cofactor.

It localises to the cell inner membrane. The catalysed reaction is UDP-N-acetyl-alpha-D-muramoyl-L-alanyl-gamma-D-glutamyl-meso-2,6-diaminopimeloyl-D-alanyl-D-alanine + di-trans,octa-cis-undecaprenyl phosphate = di-trans,octa-cis-undecaprenyl diphospho-N-acetyl-alpha-D-muramoyl-L-alanyl-D-glutamyl-meso-2,6-diaminopimeloyl-D-alanyl-D-alanine + UMP. The protein operates within cell wall biogenesis; peptidoglycan biosynthesis. In terms of biological role, catalyzes the initial step of the lipid cycle reactions in the biosynthesis of the cell wall peptidoglycan: transfers peptidoglycan precursor phospho-MurNAc-pentapeptide from UDP-MurNAc-pentapeptide onto the lipid carrier undecaprenyl phosphate, yielding undecaprenyl-pyrophosphoryl-MurNAc-pentapeptide, known as lipid I. The protein is Phospho-N-acetylmuramoyl-pentapeptide-transferase of Campylobacter jejuni (strain RM1221).